A 335-amino-acid polypeptide reads, in one-letter code: Methionine aminopeptidase 1D, mitochondrial (335 aa).

The N-terminal 19 residues, 1-19 (MAAPSGVHLLVRRGSHRIF), are a transit peptide targeting the mitochondrion. Histidine 161 lines the substrate pocket. The a divalent metal cation site is built by aspartate 178, aspartate 189, and histidine 252. Histidine 259 is a substrate binding site. A divalent metal cation contacts are provided by glutamate 284 and glutamate 315.

This sequence belongs to the peptidase M24A family. Methionine aminopeptidase type 1 subfamily. It depends on Co(2+) as a cofactor. Zn(2+) serves as cofactor. Mn(2+) is required as a cofactor. Requires Fe(2+) as cofactor. In terms of tissue distribution, overexpressed in colon cancer cell lines and colon tumors as compared to normal tissues (at protein level).

The protein localises to the mitochondrion. The enzyme catalyses Release of N-terminal amino acids, preferentially methionine, from peptides and arylamides.. Removes the N-terminal methionine from nascent proteins. The N-terminal methionine is often cleaved when the second residue in the primary sequence is small and uncharged (Met-Ala-, Cys, Gly, Pro, Ser, Thr, or Val). Requires deformylation of the N(alpha)-formylated initiator methionine before it can be hydrolyzed. May play a role in colon tumorigenesis. This Homo sapiens (Human) protein is Methionine aminopeptidase 1D, mitochondrial (METAP1D).